A 467-amino-acid chain; its full sequence is Probable serine hydroxymethyltransferase, cytosolic (467 aa).

Position 243 is an N6-(pyridoxal phosphate)lysine (lysine 243).

This sequence belongs to the SHMT family. As to quaternary structure, homotetramer. Pyridoxal 5'-phosphate serves as cofactor.

The protein localises to the cytoplasm. It catalyses the reaction (6R)-5,10-methylene-5,6,7,8-tetrahydrofolate + glycine + H2O = (6S)-5,6,7,8-tetrahydrofolate + L-serine. It participates in one-carbon metabolism; tetrahydrofolate interconversion. Interconversion of serine and glycine. In Schizosaccharomyces pombe (strain 972 / ATCC 24843) (Fission yeast), this protein is Probable serine hydroxymethyltransferase, cytosolic.